The primary structure comprises 380 residues: Cytochrome b (380 aa).

4 helical membrane-spanning segments follow: residues 34–54, 78–99, 114–134, and 179–199; these read FGSL…FLAM, WLLR…YFHI, WYTG…GYIL, and FFTL…IHLL. The heme b site is built by His84 and His98. Residues His183 and His197 each contribute to the heme b site. Position 202 (His202) interacts with a ubiquinone. The next 4 membrane-spanning stretches (helical) occupy residues 227-247, 289-309, 321-341, and 348-368; these read YKDL…TLFL, LGGV…PTLH, FTQI…WIGA, and FIMI…LLIP.

It belongs to the cytochrome b family. As to quaternary structure, the cytochrome bc1 complex contains 3 respiratory subunits (MT-CYB, CYC1 and UQCRFS1), 2 core proteins (UQCRC1 and UQCRC2) and probably 6 low-molecular weight proteins. It depends on heme b as a cofactor.

Its subcellular location is the mitochondrion inner membrane. Functionally, component of the ubiquinol-cytochrome c reductase complex (complex III or cytochrome b-c1 complex) that is part of the mitochondrial respiratory chain. The b-c1 complex mediates electron transfer from ubiquinol to cytochrome c. Contributes to the generation of a proton gradient across the mitochondrial membrane that is then used for ATP synthesis. This Pelomedusa subrufa (African side-necked turtle) protein is Cytochrome b (MT-CYB).